A 604-amino-acid polypeptide reads, in one-letter code: MISVKRNTWRALSLVIGDCRKKGNFEYCQDRTEKHSTMPDSPVDVKTQSRLTPPTMPPPPTTQGAPRTSSFTPTTLTNGTSHSPTALNGAPSPPNGFSNGPSSSSSSSLANQQLPPACGARQLSKLKRFLTTLQQFGNDISPEIGERVRTLVLGLVNSTLTIEEFHSKLQEATNFPLRPFVIPFLKANLPLLQRELLHCARLAKQNPAQYLAQHEQLLLDASTTSPVDSSELLLDVNENGKRRTPDRTKENGFDREPLHSEHPSKRPCTISPGQRYSPNNGLSYQPNGLPHPTPPPPQHYRLDDMAIAHHYRDSYRHPSHRDLRDRNRPMGLHGTRQEEMIDHRLTDREWAEEWKHLDHLLNCIMDMVEKTRRSLTVLRRCQEADREELNYWIRRYSDAEDLKKGGGSSSSHSRQQSPVNPDPVALDAHREFLHRPASGYVPEEIWKKAEEAVNEVKRQAMTELQKAVSEAERKAHDMITTERAKMERTVAEAKRQAAEDALAVINQQEDSSESCWNCGRKASETCSGCNTARYCGSFCQHKDWEKHHHICGQTLQAQQQGDTPAVSSSVTPNSGAGSPMDTPPAATPRSTTPGTPSTIETTPR.

The tract at residues 32–114 (TEKHSTMPDS…SSSSLANQQL (83 aa)) is disordered. Position 41 is a phosphoserine (Ser41). Polar residues predominate over residues 63-86 (QGAPRTSSFTPTTLTNGTSHSPTA). Residues 95-114 (NGFSNGPSSSSSSSLANQQL) show a composition bias toward low complexity. Residues 120–215 (ARQLSKLKRF…NPAQYLAQHE (96 aa)) form the TAFH domain. Residues 230–298 (SELLLDVNEN…LPHPTPPPPQ (69 aa)) form a disordered region. Basic and acidic residues predominate over residues 238–264 (ENGKRRTPDRTKENGFDREPLHSEHPS). The segment covering 271–285 (SPGQRYSPNNGLSYQ) has biased composition (polar residues). Residues 289 to 298 (LPHPTPPPPQ) are compositionally biased toward pro residues. The important for oligomerization stretch occupies residues 337–383 (QEEMIDHRLTDREWAEEWKHLDHLLNCIMDMVEKTRRSLTVLRRCQE). The tract at residues 337 to 383 (QEEMIDHRLTDREWAEEWKHLDHLLNCIMDMVEKTRRSLTVLRRCQE) is nervy homology region 2 (NHR2). Positions 401–423 (DLKKGGGSSSSHSRQQSPVNPDP) are disordered. Ser417 is modified (phosphoserine). The segment at 443 to 492 (EEIWKKAEEAVNEVKRQAMTELQKAVSEAERKAHDMITTERAKMERTVAE) is nervy homology region 3 (NHR3). Zn(2+) is bound by residues Cys515, Cys518, Cys526, Cys529, Cys535, Cys539, His547, and Cys551. The MYND-type zinc-finger motif lies at 515 to 551 (CWNCGRKASETCSGCNTARYCGSFCQHKDWEKHHHIC). A compositionally biased stretch (polar residues) spans 557–576 (AQQQGDTPAVSSSVTPNSGA). The disordered stretch occupies residues 557–604 (AQQQGDTPAVSSSVTPNSGAGSPMDTPPAATPRSTTPGTPSTIETTPR). Low complexity predominate over residues 587 to 604 (TPRSTTPGTPSTIETTPR).

It belongs to the CBFA2T family. As to quaternary structure, homooligomer. Homotetramerization is mediated by nervy homology region 2 (NRH2). Can interact with CBFA2T2 and CBFA2T3; heterotetramerization between members of the CBFA2T family is proposed. Interacts with TCF12, SIN3A, HDAC1, HDAC2, HDAC3, NCOR1, NCOR2. Interacts with ATN1 (via its N-terminus); the interaction enhances the transcriptional repression. Interacts (via its N-terminus) with ZBTB16; the interaction increases the transcription repression activity of ZBTB16. AML1-MTG8/ETO fusion protein interacts with CBFB. AML1-MTG8/ETO is part of a stable transcription factor complex AETFC in leukemic cells; AETFC formation seems to be involved in recruitment of EP300. AML1-MTG8/ETO nervy homology region 2-mediated oligomerization is proposed to be homotypic, required for AML1-MTG8/ETO-mediated transformation of primary hematopoietic cells and is required for AML1-MTG8/ETO interaction with TCF12. In terms of tissue distribution, most abundantly expressed in brain. Lower levels in lung, heart, testis and ovary.

The protein resides in the nucleus. In terms of biological role, transcriptional corepressor which facilitates transcriptional repression via its association with DNA-binding transcription factors and recruitment of other corepressors and histone-modifying enzymes. Can repress the expression of MMP7 in a ZBTB33-dependent manner. Can repress transactivation mediated by TCF12. Acts as a negative regulator of adipogenesis. The AML1-MTG8/ETO fusion protein frequently found in leukemic cells is involved in leukemogenesis and contributes to hematopoietic stem/progenitor cell self-renewal. This chain is Protein CBFA2T1 (RUNX1T1), found in Homo sapiens (Human).